The following is a 193-amino-acid chain: Large ribosomal subunit protein bL25 (193 aa).

It belongs to the bacterial ribosomal protein bL25 family. CTC subfamily. Part of the 50S ribosomal subunit; part of the 5S rRNA/L5/L18/L25 subcomplex. Contacts the 5S rRNA. Binds to the 5S rRNA independently of L5 and L18.

This is one of the proteins that binds to the 5S RNA in the ribosome where it forms part of the central protuberance. This chain is Large ribosomal subunit protein bL25, found in Lachnoclostridium phytofermentans (strain ATCC 700394 / DSM 18823 / ISDg) (Clostridium phytofermentans).